The primary structure comprises 203 residues: Urease accessory protein UreG (203 aa).

14-21 (GPVGSGKT) serves as a coordination point for GTP.

This sequence belongs to the SIMIBI class G3E GTPase family. UreG subfamily. Homodimer. UreD, UreF and UreG form a complex that acts as a GTP-hydrolysis-dependent molecular chaperone, activating the urease apoprotein by helping to assemble the nickel containing metallocenter of UreC. The UreE protein probably delivers the nickel.

The protein resides in the cytoplasm. Its function is as follows. Facilitates the functional incorporation of the urease nickel metallocenter. This process requires GTP hydrolysis, probably effectuated by UreG. The chain is Urease accessory protein UreG from Rhizobium etli (strain CIAT 652).